A 371-amino-acid polypeptide reads, in one-letter code: UPF0284 protein tll2306 (371 aa).

It belongs to the UPF0284 family.

The sequence is that of UPF0284 protein tll2306 from Thermosynechococcus vestitus (strain NIES-2133 / IAM M-273 / BP-1).